We begin with the raw amino-acid sequence, 122 residues long: Small ribosomal subunit protein uS13 (122 aa).

Residues 97–122 are disordered; it reads PVRGQRTHTNARTRKGPAKAIAGKKK.

It belongs to the universal ribosomal protein uS13 family. As to quaternary structure, part of the 30S ribosomal subunit. Forms a loose heterodimer with protein S19. Forms two bridges to the 50S subunit in the 70S ribosome.

Functionally, located at the top of the head of the 30S subunit, it contacts several helices of the 16S rRNA. In the 70S ribosome it contacts the 23S rRNA (bridge B1a) and protein L5 of the 50S subunit (bridge B1b), connecting the 2 subunits; these bridges are implicated in subunit movement. Contacts the tRNAs in the A and P-sites. In Brucella abortus (strain S19), this protein is Small ribosomal subunit protein uS13.